The primary structure comprises 238 residues: 1-(5-phosphoribosyl)-5-[(5-phosphoribosylamino)methylideneamino] imidazole-4-carboxamide isomerase (238 aa).

The Proton acceptor role is filled by Asp-8. The active-site Proton donor is the Asp-129.

This sequence belongs to the HisA/HisF family.

The protein localises to the cytoplasm. The catalysed reaction is 1-(5-phospho-beta-D-ribosyl)-5-[(5-phospho-beta-D-ribosylamino)methylideneamino]imidazole-4-carboxamide = 5-[(5-phospho-1-deoxy-D-ribulos-1-ylimino)methylamino]-1-(5-phospho-beta-D-ribosyl)imidazole-4-carboxamide. Its pathway is amino-acid biosynthesis; L-histidine biosynthesis; L-histidine from 5-phospho-alpha-D-ribose 1-diphosphate: step 4/9. The sequence is that of 1-(5-phosphoribosyl)-5-[(5-phosphoribosylamino)methylideneamino] imidazole-4-carboxamide isomerase from Clostridium kluyveri (strain NBRC 12016).